The following is a 429-amino-acid chain: C4-dicarboxylate transport protein (429 aa).

Helical transmembrane passes span 9-29 (VLYV…HYYP), 45-65 (LIKM…IAGM), 79-99 (LLYF…ATHI), 149-169 (GEIL…AHLG), 185-205 (VLFG…FGAM), 223-243 (LIGT…GAIA), 308-328 (IYMT…LTWM), and 356-376 (AATL…ILGI).

Belongs to the dicarboxylate/amino acid:cation symporter (DAACS) (TC 2.A.23) family.

The protein localises to the cell inner membrane. Functionally, responsible for the transport of dicarboxylates such as succinate, fumarate, and malate from the periplasm across the membrane. The polypeptide is C4-dicarboxylate transport protein (Burkholderia multivorans (strain ATCC 17616 / 249)).